The primary structure comprises 178 residues: Ribosome maturation factor RimP (178 aa).

This sequence belongs to the RimP family.

It is found in the cytoplasm. In terms of biological role, required for maturation of 30S ribosomal subunits. The chain is Ribosome maturation factor RimP from Mycolicibacterium paratuberculosis (strain ATCC BAA-968 / K-10) (Mycobacterium paratuberculosis).